We begin with the raw amino-acid sequence, 130 residues long: Large ribosomal subunit protein bL17 (130 aa).

It belongs to the bacterial ribosomal protein bL17 family. In terms of assembly, part of the 50S ribosomal subunit. Contacts protein L32.

The protein is Large ribosomal subunit protein bL17 of Buchnera aphidicola subsp. Acyrthosiphon pisum (strain 5A).